The sequence spans 442 residues: 3-phosphoshikimate 1-carboxyvinyltransferase (442 aa).

The 3-phosphoshikimate site is built by K25, S26, and R30. Residue K25 coordinates phosphoenolpyruvate. Phosphoenolpyruvate-binding residues include G96 and R124. 3-phosphoshikimate contacts are provided by S171, S172, Q173, S203, D325, and K352. Phosphoenolpyruvate is bound at residue Q173. D325 functions as the Proton acceptor in the catalytic mechanism. The phosphoenolpyruvate site is built by R356, R400, and K425.

It belongs to the EPSP synthase family. As to quaternary structure, monomer.

It localises to the cytoplasm. The catalysed reaction is 3-phosphoshikimate + phosphoenolpyruvate = 5-O-(1-carboxyvinyl)-3-phosphoshikimate + phosphate. Its pathway is metabolic intermediate biosynthesis; chorismate biosynthesis; chorismate from D-erythrose 4-phosphate and phosphoenolpyruvate: step 6/7. Functionally, catalyzes the transfer of the enolpyruvyl moiety of phosphoenolpyruvate (PEP) to the 5-hydroxyl of shikimate-3-phosphate (S3P) to produce enolpyruvyl shikimate-3-phosphate and inorganic phosphate. In Bordetella parapertussis (strain 12822 / ATCC BAA-587 / NCTC 13253), this protein is 3-phosphoshikimate 1-carboxyvinyltransferase.